We begin with the raw amino-acid sequence, 314 residues long: Putative S-adenosyl-L-methionine-dependent methyltransferase MAV_4441 (314 aa).

Residues aspartate 138 and aspartate 167 to leucine 168 contribute to the S-adenosyl-L-methionine site.

Belongs to the UPF0677 family.

In terms of biological role, exhibits S-adenosyl-L-methionine-dependent methyltransferase activity. This Mycobacterium avium (strain 104) protein is Putative S-adenosyl-L-methionine-dependent methyltransferase MAV_4441.